The primary structure comprises 397 residues: MHILRFSDLCAQGQARGQRVFIRADLNVPQDDAGRITEDTRIRASVPCIQMALEAGAAVMVTSHLGRPTEGEFKPEDSLAPVAQRLSELLGREVPLVADWVDGVQVAPGQVVLLENCRVNKGEKKNNPELAKKMAQLCDIYVNDAFGTAHRAEGTTYGIAEYAKVACAGPLLAAEIDAIQTALANPKRPLVAIVAGSKVSTKLTILQSLSKNVDGLVVGGGIANTFMLAAGLPIGKSLAEPDLVNEAKAVIAAMAARGAEVPIPTDVVVAKAFAADAPATVKKASEVAEDDLILDIGPETAAKLAAQLKAAGTIVWNGPVGVFEFDQFAGGTKAIAQAIAESSAFSIAGGGDTLAAIAKYGIEKDVGYISTGGGAFLEVLEGKTLPAFEILQKRAAG.

Residues 25–27 (DLN), Arg-41, 64–67 (HLGR), Arg-118, and Arg-151 each bind substrate. Residues Lys-202, Glu-324, and 350–353 (GGDT) each bind ATP.

Belongs to the phosphoglycerate kinase family. Monomer.

The protein localises to the cytoplasm. It catalyses the reaction (2R)-3-phosphoglycerate + ATP = (2R)-3-phospho-glyceroyl phosphate + ADP. The protein operates within carbohydrate degradation; glycolysis; pyruvate from D-glyceraldehyde 3-phosphate: step 2/5. This Acidovorax ebreus (strain TPSY) (Diaphorobacter sp. (strain TPSY)) protein is Phosphoglycerate kinase.